Consider the following 426-residue polypeptide: MLDIRVIRENPEEVKARLKPRSGDAWKLVDDVLACDEARRNAETEKQALQSERNATSKQIGMLKKKGEDTSSIEARVREIGDRIRELDRVAEENAAQLTSLLMNIPNLPHLECPVGADETANPEIKLWGEKPAIENPKDHVELAANLGMISFEDGARITGSGFVVYRGAGARLERALINFLLNTQTVENGYQEVGVPFVVKRECMEGTGQLPKFEEDMYGTEDQQMFLIPTAEVPVTNLYRDTILQESDLPIKMAAYTPCFRREAGSAGRINRGMIRVHQFDKVELVQILKPEDSFRELEVLRSHAESILQKLGLHYRVIELCTGDLGFSSAKTYDIEVWAPGQGQYLEVSSCSCFTDYQARRMRLRYKDADGKNQFCHTLNGSGTALPRLYVALLETYQQPDGSIRIPEALVPYFGADCIRPEQA.

A disordered region spans residues 44–67; it reads TEKQALQSERNATSKQIGMLKKKG. The segment covering 47 to 59 has biased composition (polar residues); the sequence is QALQSERNATSKQ. 231–233 serves as a coordination point for L-serine; sequence TAE. Residues 262–264 and Val278 each bind ATP; that span reads RRE. An L-serine-binding site is contributed by Glu285. 349-352 provides a ligand contact to ATP; that stretch reads EVSS. Ser384 contributes to the L-serine binding site.

It belongs to the class-II aminoacyl-tRNA synthetase family. Type-1 seryl-tRNA synthetase subfamily. Homodimer. The tRNA molecule binds across the dimer.

The protein localises to the cytoplasm. It catalyses the reaction tRNA(Ser) + L-serine + ATP = L-seryl-tRNA(Ser) + AMP + diphosphate + H(+). The enzyme catalyses tRNA(Sec) + L-serine + ATP = L-seryl-tRNA(Sec) + AMP + diphosphate + H(+). It functions in the pathway aminoacyl-tRNA biosynthesis; selenocysteinyl-tRNA(Sec) biosynthesis; L-seryl-tRNA(Sec) from L-serine and tRNA(Sec): step 1/1. Its function is as follows. Catalyzes the attachment of serine to tRNA(Ser). Is also able to aminoacylate tRNA(Sec) with serine, to form the misacylated tRNA L-seryl-tRNA(Sec), which will be further converted into selenocysteinyl-tRNA(Sec). This is Serine--tRNA ligase from Akkermansia muciniphila (strain ATCC BAA-835 / DSM 22959 / JCM 33894 / BCRC 81048 / CCUG 64013 / CIP 107961 / Muc).